A 342-amino-acid polypeptide reads, in one-letter code: Holliday junction branch migration complex subunit RuvB (342 aa).

Residues 1–181 (MENRMVTPFD…FGMLCAMEFY (181 aa)) are large ATPase domain (RuvB-L). ATP contacts are provided by residues L20, R21, G62, K65, T66, T67, 128 to 130 (EDY), R171, Y181, and R218. T66 contacts Mg(2+). The interval 182 to 252 (TDEELMEIVV…GAKAALDLLE (71 aa)) is small ATPAse domain (RuvB-S). A head domain (RuvB-H) region spans residues 255–342 (KEGLDKIDNK…KDNQVSIFNK (88 aa)). R310 and R315 together coordinate DNA.

The protein belongs to the RuvB family. Homohexamer. Forms an RuvA(8)-RuvB(12)-Holliday junction (HJ) complex. HJ DNA is sandwiched between 2 RuvA tetramers; dsDNA enters through RuvA and exits via RuvB. An RuvB hexamer assembles on each DNA strand where it exits the tetramer. Each RuvB hexamer is contacted by two RuvA subunits (via domain III) on 2 adjacent RuvB subunits; this complex drives branch migration. In the full resolvosome a probable DNA-RuvA(4)-RuvB(12)-RuvC(2) complex forms which resolves the HJ.

The protein localises to the cytoplasm. It carries out the reaction ATP + H2O = ADP + phosphate + H(+). The RuvA-RuvB-RuvC complex processes Holliday junction (HJ) DNA during genetic recombination and DNA repair, while the RuvA-RuvB complex plays an important role in the rescue of blocked DNA replication forks via replication fork reversal (RFR). RuvA specifically binds to HJ cruciform DNA, conferring on it an open structure. The RuvB hexamer acts as an ATP-dependent pump, pulling dsDNA into and through the RuvAB complex. RuvB forms 2 homohexamers on either side of HJ DNA bound by 1 or 2 RuvA tetramers; 4 subunits per hexamer contact DNA at a time. Coordinated motions by a converter formed by DNA-disengaged RuvB subunits stimulates ATP hydrolysis and nucleotide exchange. Immobilization of the converter enables RuvB to convert the ATP-contained energy into a lever motion, pulling 2 nucleotides of DNA out of the RuvA tetramer per ATP hydrolyzed, thus driving DNA branch migration. The RuvB motors rotate together with the DNA substrate, which together with the progressing nucleotide cycle form the mechanistic basis for DNA recombination by continuous HJ branch migration. Branch migration allows RuvC to scan DNA until it finds its consensus sequence, where it cleaves and resolves cruciform DNA. The protein is Holliday junction branch migration complex subunit RuvB of Clostridium botulinum (strain ATCC 19397 / Type A).